The chain runs to 831 residues: Translation initiation factor IF-2 (831 aa).

Positions 116-157 are disordered; it reads IEPLETDKEVEQKQQNTEENKVEVSAKIVQDDEDIPSQIPKK. The segment covering 117–139 has biased composition (basic and acidic residues); it reads EPLETDKEVEQKQQNTEENKVEV. One can recognise a tr-type G domain in the interval 329–499; sequence TRAPVVTVMG…LLIAEMQDLK (171 aa). The segment at 338-345 is G1; it reads GHVDHGKT. 338–345 provides a ligand contact to GTP; the sequence is GHVDHGKT. A G2 region spans residues 363-367; it reads GITQH. Residues 385–388 are G3; the sequence is DTPG. Residues 385-389 and 439-442 each bind GTP; these read DTPGH and NKID. Residues 439–442 form a G4 region; the sequence is NKID. The interval 475 to 477 is G5; that stretch reads SAL.

The protein belongs to the TRAFAC class translation factor GTPase superfamily. Classic translation factor GTPase family. IF-2 subfamily.

It is found in the cytoplasm. Functionally, one of the essential components for the initiation of protein synthesis. Protects formylmethionyl-tRNA from spontaneous hydrolysis and promotes its binding to the 30S ribosomal subunits. Also involved in the hydrolysis of GTP during the formation of the 70S ribosomal complex. The polypeptide is Translation initiation factor IF-2 (Rickettsia conorii (strain ATCC VR-613 / Malish 7)).